A 334-amino-acid polypeptide reads, in one-letter code: Protein OPG181 (334 aa).

Belongs to the orthopoxvirus OPG181 family.

In Vaccinia virus (strain Copenhagen) (VACV), this protein is Protein OPG181 (OPG181).